The following is a 311-amino-acid chain: Acetyl-coenzyme A carboxylase carboxyl transferase subunit beta (311 aa).

One can recognise a CoA carboxyltransferase N-terminal domain in the interval 32–299; it reads LWVKCPVSEE…TSMPAALTPP (268 aa). The segment at 291–311 is disordered; it reads SMPAALTPPAPDHVVADGGSH.

It belongs to the AccD/PCCB family. In terms of assembly, acetyl-CoA carboxylase is a heterohexamer composed of biotin carboxyl carrier protein (AccB), biotin carboxylase (AccC) and two subunits each of ACCase subunit alpha (AccA) and ACCase subunit beta (AccD).

The protein localises to the cytoplasm. It catalyses the reaction N(6)-carboxybiotinyl-L-lysyl-[protein] + acetyl-CoA = N(6)-biotinyl-L-lysyl-[protein] + malonyl-CoA. Its pathway is lipid metabolism; malonyl-CoA biosynthesis; malonyl-CoA from acetyl-CoA: step 1/1. In terms of biological role, component of the acetyl coenzyme A carboxylase (ACC) complex. Biotin carboxylase (BC) catalyzes the carboxylation of biotin on its carrier protein (BCCP) and then the CO(2) group is transferred by the transcarboxylase to acetyl-CoA to form malonyl-CoA. The protein is Acetyl-coenzyme A carboxylase carboxyl transferase subunit beta of Maricaulis maris (strain MCS10) (Caulobacter maris).